A 57-amino-acid chain; its full sequence is Lantibiotic nisin-Z (57 aa).

The propeptide occupies 1-23; sequence MSTKDFNLDLVSVSKKDSGASPR. At threonine 25 the chain carries 2,3-didehydrobutyrine. Positions 26 to 30 form a cross-link, lanthionine (Ser-Cys); the sequence is SISLC. 2,3-didehydroalanine (Ser) is present on serine 28. 4 cross-links (beta-methyllanthionine (Thr-Cys)) span residues 31-34, 36-42, 46-49, and 48-51; these read TPGC, TGALMGC, TATC, and TCNC. Serine 56 is modified (2,3-didehydroalanine (Ser)).

The protein belongs to the type A lantibiotic family. Post-translationally, maturation of lantibiotics involves the enzymatic conversion of Thr, and Ser into dehydrated AA and the formation of thioether bonds with cysteine. This is followed by membrane translocation and cleavage of the modified precursor. In terms of processing, the structure of the 2,3-didehydrobutyrine is not discussed in PubMed:15361862. It is probably the Z-isomer by similarity.

Its function is as follows. Lanthionine-containing peptide antibiotic (lantibiotic) active on Gram-positive bacteria. The bactericidal activity of lantibiotics is based on depolarization of energized bacterial cytoplasmic membranes, initiated by the formation of aqueous transmembrane pores. This is Lantibiotic nisin-Z (nisZ) from Lactococcus lactis subsp. lactis (Streptococcus lactis).